Here is a 90-residue protein sequence, read N- to C-terminus: Bombyxin B-12 (90 aa).

An N-terminal signal peptide occupies residues 1 to 20 (MMKTTIMFMLVVVISLTYSS). 3 cysteine pairs are disulfide-bonded: Cys30–Cys76, Cys42–Cys89, and Cys75–Cys80. Residues 49 to 67 (SGAQYAPYFWTRQYLGSRG) constitute a propeptide, c peptide like.

It belongs to the insulin family. Heterodimer of a B chain and an A chain linked by two disulfide bonds.

Its subcellular location is the secreted. Functionally, brain peptide responsible for activation of prothoracic glands to produce ecdysone in insects. The chain is Bombyxin B-12 (BBXB12) from Bombyx mori (Silk moth).